Consider the following 502-residue polypeptide: Glutamate--tRNA ligase (502 aa).

The 'HIGH' region motif lies at 12 to 22; that stretch reads PSPTGYLHVGG. The 'KMSKS' region signature appears at 259–263; the sequence is KLSKR. K262 serves as a coordination point for ATP.

It belongs to the class-I aminoacyl-tRNA synthetase family. Glutamate--tRNA ligase type 1 subfamily. In terms of assembly, monomer.

It localises to the cytoplasm. The enzyme catalyses tRNA(Glu) + L-glutamate + ATP = L-glutamyl-tRNA(Glu) + AMP + diphosphate. Its function is as follows. Catalyzes the attachment of glutamate to tRNA(Glu) in a two-step reaction: glutamate is first activated by ATP to form Glu-AMP and then transferred to the acceptor end of tRNA(Glu). The sequence is that of Glutamate--tRNA ligase from Chlorobium phaeobacteroides (strain DSM 266 / SMG 266 / 2430).